Reading from the N-terminus, the 100-residue chain is Elevenin-Vc1 (100 aa).

A signal peptide spans 1–24 (MAPSQKALLVLVLSMLLTASDSWA). Cysteines 29 and 38 form a disulfide. Positions 44–100 (KRGGDSLSVGGSAELDDALTDPFLRSEEPREWRELTRLSRVLQTFLSHPTGETEQHD) are excised as a propeptide.

It belongs to the elevenin family. In terms of assembly, monomer. As to expression, expressed by the venom duct.

Its subcellular location is the secreted. Functionally, may mimic the function of prey elevenin neuropeptide. In vivo, intracranial injection in mice induces hyperactivity (tested at 5 and 10 nM). This Conus victoriae (Queen Victoria cone) protein is Elevenin-Vc1.